Reading from the N-terminus, the 404-residue chain is 1-deoxy-D-xylulose 5-phosphate reductoisomerase (404 aa).

T5, G6, S7, I8, G31, R32, N33, and N121 together coordinate NADPH. K122 serves as a coordination point for 1-deoxy-D-xylulose 5-phosphate. E123 is an NADPH binding site. D147 contacts Mn(2+). The 1-deoxy-D-xylulose 5-phosphate site is built by S148, E149, S185, and H208. Residue E149 coordinates Mn(2+). An NADPH-binding site is contributed by G214. 1-deoxy-D-xylulose 5-phosphate is bound by residues S221, N226, K227, and E230. E230 serves as a coordination point for Mn(2+).

Belongs to the DXR family. Mg(2+) is required as a cofactor. The cofactor is Mn(2+).

The catalysed reaction is 2-C-methyl-D-erythritol 4-phosphate + NADP(+) = 1-deoxy-D-xylulose 5-phosphate + NADPH + H(+). It participates in isoprenoid biosynthesis; isopentenyl diphosphate biosynthesis via DXP pathway; isopentenyl diphosphate from 1-deoxy-D-xylulose 5-phosphate: step 1/6. In terms of biological role, catalyzes the NADPH-dependent rearrangement and reduction of 1-deoxy-D-xylulose-5-phosphate (DXP) to 2-C-methyl-D-erythritol 4-phosphate (MEP). This chain is 1-deoxy-D-xylulose 5-phosphate reductoisomerase, found in Prochlorococcus marinus subsp. pastoris (strain CCMP1986 / NIES-2087 / MED4).